Consider the following 61-residue polypeptide: Large ribosomal subunit protein bL32 (61 aa).

Over residues M1–H19 the composition is skewed to basic residues. Residues M1–D20 are disordered.

It belongs to the bacterial ribosomal protein bL32 family.

The protein is Large ribosomal subunit protein bL32 of Bacteroides fragilis (strain YCH46).